Consider the following 70-residue polypeptide: MKFLVNVALVFMVVYISYIYAAPEPEPAPEPEAEADAEADPEAGIGAVLKVLTTGLPALINWIKRKRQQG.

Residues 1–21 form the signal peptide; the sequence is MKFLVNVALVFMVVYISYIYA. Residues 22 to 43 constitute a propeptide, removed by a dipeptidylpeptidase; that stretch reads APEPEPAPEPEAEADAEADPEA. Glycine 44 carries the post-translational modification N-formylglycine; partial. Glutamine 69 carries the glutamine amide modification.

It belongs to the melittin family. Monomer (in solution and for integration into membranes), homotetramer (in solution and potentially as a toroidal pore in membranes), and potenially homomultimer (as a toroidal pore in membranes). As to expression, expressed by the venom gland.

It is found in the secreted. It localises to the target cell membrane. In terms of biological role, main toxin of bee venom with strong hemolytic activity and antimicrobial activity. It has enhancing effects on bee venom phospholipase A2 activity. This amphipathic toxin binds to negatively charged membrane surface and forms pore by inserting into lipid bilayers inducing the leakage of ions and molecules and the enhancement of permeability that ultimately leads to cell lysis. It acts as a voltage-gated pore with higher selectivity for anions over cations. The ion conductance has been shown to be voltage-dependent. Self-association of melittin in membranes is promoted by high ionic strength, but not by the presence of negatively charged lipids. In vivo, intradermal injection into healthy human volunteers produce sharp pain sensation and an inflammatory response. It produces pain by activating primary nociceptor cells directly and indirectly due to its ability to activate plasma membrane phospholipase A2 and its pore-forming activity. Shows lower cytotoxicity when tested on E.coli and cancer cell lines than melittin, as well as lower anti-inflammatory properties and lower properties to interact to small unilamellar liposomes. In Apis cerana (Indian honeybee), this protein is Melittin-N (MELT).